Here is a 237-residue protein sequence, read N- to C-terminus: Ribonuclease PH (237 aa).

Residues R86 and 124-126 contribute to the phosphate site; that span reads GTR.

This sequence belongs to the RNase PH family. In terms of assembly, homohexameric ring arranged as a trimer of dimers.

The catalysed reaction is tRNA(n+1) + phosphate = tRNA(n) + a ribonucleoside 5'-diphosphate. Phosphorolytic 3'-5' exoribonuclease that plays an important role in tRNA 3'-end maturation. Removes nucleotide residues following the 3'-CCA terminus of tRNAs; can also add nucleotides to the ends of RNA molecules by using nucleoside diphosphates as substrates, but this may not be physiologically important. Probably plays a role in initiation of 16S rRNA degradation (leading to ribosome degradation) during starvation. The protein is Ribonuclease PH of Cereibacter sphaeroides (strain KD131 / KCTC 12085) (Rhodobacter sphaeroides).